Reading from the N-terminus, the 359-residue chain is Alkanal monooxygenase alpha chain (359 aa).

It belongs to the bacterial luciferase oxidoreductase family. In terms of assembly, heterodimer of an alpha and a beta chain.

The enzyme catalyses a long-chain fatty aldehyde + FMNH2 + O2 = a long-chain fatty acid + hnu + FMN + H2O + 2 H(+). Functionally, light-emitting reaction in luminous bacteria. The chain is Alkanal monooxygenase alpha chain (luxA) from Photorhabdus laumondii subsp. laumondii (strain DSM 15139 / CIP 105565 / TT01) (Photorhabdus luminescens subsp. laumondii).